Consider the following 542-residue polypeptide: Calcium/calmodulin-dependent protein kinase type II subunit beta (542 aa).

The 259-residue stretch at 14–272 (YQLYEDIGKG…AHEALKHPWV (259 aa)) folds into the Protein kinase domain. A Phosphotyrosine modification is found at tyrosine 17. Residues 20 to 28 (IGKGAFSVV) and lysine 43 each bind ATP. Aspartate 136 acts as the Proton acceptor in catalysis. Residues 283-292 (HRQETVECLK) are autoinhibitory domain. A Phosphothreonine; by autocatalysis modification is found at threonine 287. A calmodulin-binding region spans residues 291–301 (LKKFNARRKLK). Phosphothreonine; by autocatalysis is present on residues threonine 306 and threonine 307. Residues 349–407 (ADGVKPQTNSTKNSAAATSPKGTLPPAALEPQTTVIHNPVDGIKESSDSTHTTIEDEDT) are disordered. The segment covering 354 to 369 (PQTNSTKNSAAATSPK) has biased composition (polar residues). Residues serine 367, serine 394, and serine 397 each carry the phosphoserine modification. 2 positions are modified to phosphothreonine: threonine 400 and threonine 401.

This sequence belongs to the protein kinase superfamily. CAMK Ser/Thr protein kinase family. CaMK subfamily. In terms of assembly, CAMK2 is composed of 4 different chains: alpha (CAMK2A), beta (CAMK2B), gamma (CAMK2G), and delta (CAMK2D). The different isoforms assemble into homo- or heteromultimeric holoenzymes composed of 12 subunits with two hexameric rings stacked one on top of the other. Interacts with SYNGAP1, CAMK2N2 and MPDZ. Interacts with FOXO3. Interacts (when in a kinase inactive state not associated with calmodulin) with ARC; leading to target ARC to inactive synapses. Interacts with CAMK2N1; this interaction requires CAMK2B activation by Ca(2+). In terms of processing, autophosphorylation of Thr-287 following activation by Ca(2+)/calmodulin. Phosphorylation of Thr-287 locks the kinase into an activated state.

Its subcellular location is the cytoplasm. The protein localises to the cytoskeleton. It localises to the microtubule organizing center. The protein resides in the centrosome. It is found in the sarcoplasmic reticulum membrane. Its subcellular location is the synapse. The catalysed reaction is L-seryl-[protein] + ATP = O-phospho-L-seryl-[protein] + ADP + H(+). It carries out the reaction L-threonyl-[protein] + ATP = O-phospho-L-threonyl-[protein] + ADP + H(+). Activated by Ca(2+)/calmodulin. Binding of calmodulin results in conformational change that relieves intrasteric autoinhibition and allows autophosphorylation of Thr-287 which turns the kinase in a constitutively active form and confers to the kinase a Ca(2+)-independent activity. Its function is as follows. Calcium/calmodulin-dependent protein kinase that functions autonomously after Ca(2+)/calmodulin-binding and autophosphorylation, and is involved in dendritic spine and synapse formation, neuronal plasticity and regulation of sarcoplasmic reticulum Ca(2+) transport in skeletal muscle. In neurons, plays an essential structural role in the reorganization of the actin cytoskeleton during plasticity by binding and bundling actin filaments in a kinase-independent manner. This structural function is required for correct targeting of CaMK2A, which acts downstream of NMDAR to promote dendritic spine and synapse formation and maintain synaptic plasticity which enables long-term potentiation (LTP) and hippocampus-dependent learning. In developing hippocampal neurons, promotes arborization of the dendritic tree and in mature neurons, promotes dendritic remodeling. Also regulates the migration of developing neurons. Participates in the modulation of skeletal muscle function in response to exercise. In slow-twitch muscles, is involved in regulation of sarcoplasmic reticulum (SR) Ca(2+) transport and in fast-twitch muscle participates in the control of Ca(2+) release from the SR through phosphorylation of triadin, a ryanodine receptor-coupling factor, and phospholamban (PLN/PLB), an endogenous inhibitor of SERCA2A/ATP2A2. In response to interferon-gamma (IFN-gamma) stimulation, catalyzes phosphorylation of STAT1, stimulating the JAK-STAT signaling pathway. Phosphorylates reticulophagy regulator RETREG1 at 'Ser-147' under endoplasmic reticulum stress conditions which enhances RETREG1 oligomerization and its membrane scission and reticulophagy activity. This is Calcium/calmodulin-dependent protein kinase type II subunit beta (CAMK2B) from Bos taurus (Bovine).